Consider the following 1009-residue polypeptide: Helicase-like transcription factor (1009 aa).

Arg-27 carries the omega-N-methylarginine modification. A DNA-binding region spans residues 38 to 287; sequence EFQDVIPPDD…FSEKDRPENV (250 aa). Lys-112 participates in a covalent cross-link: Glycyl lysine isopeptide (Lys-Gly) (interchain with G-Cter in SUMO2). Tyr-195 carries the post-translational modification Phosphotyrosine; by JAK2. Residue Lys-211 forms a Glycyl lysine isopeptide (Lys-Gly) (interchain with G-Cter in SUMO2) linkage. 294–301 is a binding site for ATP; sequence DDMGLGKT. The segment at 336–365 is disordered; sequence DDSMKLGGNNTSEKADGLSKDASRCSEQPS. The segment covering 348-359 has biased composition (basic and acidic residues); it reads EKADGLSKDASR. Ser-397, Ser-398, and Ser-400 each carry phosphoserine. Residues 435 to 606 enclose the Helicase ATP-binding domain; sequence IEDVAFACAL…WSLLSFLKLK (172 aa). Residues 557–560 carry the DEGH box motif; sequence DEGH. Phosphothreonine is present on Thr-736. Residues 760–801 form an RING-type zinc finger; sequence CAICLDSLTVPVITHCAHVFCKPCICQVIQNEQPHAKCPLCR. One can recognise a Helicase C-terminal domain in the interval 837–996; it reads ALMHALTDLR…TKKPNADEMK (160 aa). The interval 925–1009 is interaction with SP1 and SP3; sequence SRVFLMDPAW…INEIRTLIDL (85 aa).

The protein belongs to the SNF2/RAD54 helicase family. RAD16 subfamily. In terms of assembly, interacts with SP1 and SP3 independently of DNA; the interaction with these transcriptional factors may be required for basal transcription of target genes. Interacts with EGR1; the interaction requires prior binding to DNA and represses c-Rel via a DNA looping mechanism. Interacts with GATA4. Interacts with PCNA; the interaction promotes polyubiquitination of PCNA through association with the UBE2B-RAD18 and UBE2V2-UBE2N ubiquitin ligase complexes. Interacts with RAD18, SHPRH, UBE2V2 and UBE2N. As to expression, expressed in brain, heart, kidney, liver, lung, pancreas, placenta and skeletal muscle.

It is found in the cytoplasm. Its subcellular location is the nucleus. The protein resides in the nucleolus. It localises to the nucleoplasm. It carries out the reaction S-ubiquitinyl-[E2 ubiquitin-conjugating enzyme]-L-cysteine + [acceptor protein]-L-lysine = [E2 ubiquitin-conjugating enzyme]-L-cysteine + N(6)-ubiquitinyl-[acceptor protein]-L-lysine.. It functions in the pathway protein modification; protein ubiquitination. In terms of biological role, has both helicase and E3 ubiquitin ligase activities. Possesses intrinsic ATP-dependent nucleosome-remodeling activity; This activity may be required for transcriptional activation or repression of specific target promoters. These may include the SERPINE1 and HIV-1 promoters and the SV40 enhancer, to which this protein can bind directly. Plays a role in error-free postreplication repair (PRR) of damaged DNA and maintains genomic stability through acting as a ubiquitin ligase for 'Lys-63'-linked polyubiquitination of chromatin-bound PCNA. The protein is Helicase-like transcription factor (HLTF) of Homo sapiens (Human).